Reading from the N-terminus, the 102-residue chain is Scorpine-like-2 (102 aa).

Positions 1 to 19 (MQTQCTVLQLLVLVALCSC) are cleaved as a signal peptide. The BetaSPN-type CS-alpha/beta domain maps to 63–102 (QQLCLIVDTVQWCNKSCLAAENKEGYCHGTKCKCGIKVSY). Intrachain disulfides connect cysteine 66–cysteine 89, cysteine 75–cysteine 94, and cysteine 79–cysteine 96.

This sequence belongs to the long chain scorpion toxin family. Class 3 subfamily. As to expression, expressed by the venom gland.

Its subcellular location is the secreted. Inhibits voltage-gated potassium channels. The chain is Scorpine-like-2 from Urodacus yaschenkoi (Inland robust scorpion).